The sequence spans 464 residues: Calcitonin gene-related peptide type 1 receptor (464 aa).

A signal peptide spans 1 to 23 (MMDKKCTLCFLFLLLLNMALIAA). Residues 24-139 (ESEEGANQTD…STHEKVKTAL (116 aa)) are Extracellular-facing. Asparagine 30, asparagine 66, asparagine 118, asparagine 123, asparagine 128, and asparagine 129 each carry an N-linked (GlcNAc...) asparagine glycan. 3 cysteine pairs are disulfide-bonded: cysteine 48-cysteine 74, cysteine 65-cysteine 105, and cysteine 88-cysteine 127. A helical membrane pass occupies residues 140 to 164 (NLFYLTIIGHGLSIASLIISLIIFF). Residues 165 to 175 (YFKSLSCQRIT) lie on the Cytoplasmic side of the membrane. Residues 176–198 (LHKNLFFSFVCNSIVTIIHLTAV) traverse the membrane as a helical segment. Over 199 to 209 (ANNQALVATNP) the chain is Extracellular. A helical membrane pass occupies residues 210 to 238 (VSCKVSQFIHLYLMGCNYFWMLCEGIYLH). At 239 to 252 (TLIVVAVFAEKQHL) the chain is on the cytoplasmic side. The chain crosses the membrane as a helical span at residues 253-273 (MWYYFLGWGFPLLPACIHAIA). At 274 to 289 (RSLYYNDNCWISSDTH) the chain is on the extracellular side. Positions 288–289 (TH) are required for RAMP3 interaction. The chain crosses the membrane as a helical span at residues 290–314 (LLYIIHGPICAALLVNLFFLLNIVR). The Cytoplasmic portion of the chain corresponds to 315–329 (VLITKLKVTHQAESN). Residues 330-351 (LYMKAVRATLILVPLLGIEFVL) form a helical membrane-spanning segment. Over 352–366 (FPWRPEGKVAEEVYD) the chain is Extracellular. The chain crosses the membrane as a helical span at residues 367–387 (YVMHILMHYQGLLVSTIFCFF). Over 388–464 (NGEVQAILRR…KPEKMYDLVM (77 aa)) the chain is Cytoplasmic. Serine 420 and serine 445 each carry phosphoserine.

Belongs to the G-protein coupled receptor 2 family. In terms of assembly, heterodimer of CALCRL and RAMP1; the receptor complex functions as CGRP receptor. Heterodimer of CALCRL and RAMP2 or CALCRL and RAMP3; the complexes function as adrenomedullin receptor.

The protein localises to the cell membrane. In terms of biological role, g protein-coupled receptor which specificity is determined by its interaction with receptor-activity-modifying proteins (RAMPs). Together with RAMP1, form the receptor complex for calcitonin-gene-related peptides CALCA/CGRP1 and CALCB/CGRP2. Together with RAMP2 or RAMP3, function as receptor complexes for adrenomedullin (ADM and ADM2). Ligand binding causes a conformation change that triggers signaling via guanine nucleotide-binding proteins (G proteins) and modulates the activity of downstream effectors. Activates cAMP-dependent pathway. The chain is Calcitonin gene-related peptide type 1 receptor from Rattus norvegicus (Rat).